The sequence spans 223 residues: Octanoyltransferase (223 aa).

Residues 35 to 214 (GEARELIWLL…HFPAMLAGLR (180 aa)) form the BPL/LPL catalytic domain. Substrate-binding positions include 74-81 (RGGRYTYH), 145-147 (AIG), and 158-160 (GFS). Cysteine 176 acts as the Acyl-thioester intermediate in catalysis.

Belongs to the LipB family.

The protein localises to the cytoplasm. The enzyme catalyses octanoyl-[ACP] + L-lysyl-[protein] = N(6)-octanoyl-L-lysyl-[protein] + holo-[ACP] + H(+). The protein operates within protein modification; protein lipoylation via endogenous pathway; protein N(6)-(lipoyl)lysine from octanoyl-[acyl-carrier-protein]: step 1/2. Functionally, catalyzes the transfer of endogenously produced octanoic acid from octanoyl-acyl-carrier-protein onto the lipoyl domains of lipoate-dependent enzymes. Lipoyl-ACP can also act as a substrate although octanoyl-ACP is likely to be the physiological substrate. The protein is Octanoyltransferase of Rhizorhabdus wittichii (strain DSM 6014 / CCUG 31198 / JCM 15750 / NBRC 105917 / EY 4224 / RW1) (Sphingomonas wittichii).